We begin with the raw amino-acid sequence, 230 residues long: 3-isopropylmalate dehydratase small subunit (230 aa).

Belongs to the LeuD family. LeuD type 1 subfamily. In terms of assembly, heterodimer of LeuC and LeuD.

The catalysed reaction is (2R,3S)-3-isopropylmalate = (2S)-2-isopropylmalate. It participates in amino-acid biosynthesis; L-leucine biosynthesis; L-leucine from 3-methyl-2-oxobutanoate: step 2/4. Catalyzes the isomerization between 2-isopropylmalate and 3-isopropylmalate, via the formation of 2-isopropylmaleate. The protein is 3-isopropylmalate dehydratase small subunit of Bifidobacterium longum (strain DJO10A).